The following is a 262-amino-acid chain: Phosphatidylserine decarboxylase proenzyme (262 aa).

Catalysis depends on charge relay system; for autoendoproteolytic cleavage activity residues Asp-86, His-142, and Ser-226. Ser-226 acts as the Schiff-base intermediate with substrate; via pyruvic acid; for decarboxylase activity in catalysis. Ser-226 carries the pyruvic acid (Ser); by autocatalysis modification.

This sequence belongs to the phosphatidylserine decarboxylase family. PSD-B subfamily. Prokaryotic type I sub-subfamily. As to quaternary structure, heterodimer of a large membrane-associated beta subunit and a small pyruvoyl-containing alpha subunit. It depends on pyruvate as a cofactor. In terms of processing, is synthesized initially as an inactive proenzyme. Formation of the active enzyme involves a self-maturation process in which the active site pyruvoyl group is generated from an internal serine residue via an autocatalytic post-translational modification. Two non-identical subunits are generated from the proenzyme in this reaction, and the pyruvate is formed at the N-terminus of the alpha chain, which is derived from the carboxyl end of the proenzyme. The autoendoproteolytic cleavage occurs by a canonical serine protease mechanism, in which the side chain hydroxyl group of the serine supplies its oxygen atom to form the C-terminus of the beta chain, while the remainder of the serine residue undergoes an oxidative deamination to produce ammonia and the pyruvoyl prosthetic group on the alpha chain. During this reaction, the Ser that is part of the protease active site of the proenzyme becomes the pyruvoyl prosthetic group, which constitutes an essential element of the active site of the mature decarboxylase.

It localises to the cell membrane. It catalyses the reaction a 1,2-diacyl-sn-glycero-3-phospho-L-serine + H(+) = a 1,2-diacyl-sn-glycero-3-phosphoethanolamine + CO2. It participates in phospholipid metabolism; phosphatidylethanolamine biosynthesis; phosphatidylethanolamine from CDP-diacylglycerol: step 2/2. Its function is as follows. Catalyzes the formation of phosphatidylethanolamine (PtdEtn) from phosphatidylserine (PtdSer). The protein is Phosphatidylserine decarboxylase proenzyme of Bacillus mycoides (strain KBAB4) (Bacillus weihenstephanensis).